Reading from the N-terminus, the 302-residue chain is Ribosomal RNA small subunit methyltransferase H (302 aa).

Residues glycine 36–histidine 38, aspartate 56, phenylalanine 84, aspartate 99, and glutamine 106 contribute to the S-adenosyl-L-methionine site.

It belongs to the methyltransferase superfamily. RsmH family.

The protein resides in the cytoplasm. The catalysed reaction is cytidine(1402) in 16S rRNA + S-adenosyl-L-methionine = N(4)-methylcytidine(1402) in 16S rRNA + S-adenosyl-L-homocysteine + H(+). Functionally, specifically methylates the N4 position of cytidine in position 1402 (C1402) of 16S rRNA. The sequence is that of Ribosomal RNA small subunit methyltransferase H from Flavobacterium johnsoniae (strain ATCC 17061 / DSM 2064 / JCM 8514 / BCRC 14874 / CCUG 350202 / NBRC 14942 / NCIMB 11054 / UW101) (Cytophaga johnsonae).